Consider the following 152-residue polypeptide: Large ribosomal subunit protein uL24 (152 aa).

The disordered stretch occupies residues 128-152; it reads VVEEKETSKTSEGGGKTIEETEGEK.

The protein belongs to the universal ribosomal protein uL24 family. In terms of assembly, part of the 50S ribosomal subunit.

One of two assembly initiator proteins, it binds directly to the 5'-end of the 23S rRNA, where it nucleates assembly of the 50S subunit. In terms of biological role, located at the polypeptide exit tunnel on the outside of the subunit. In Staphylothermus marinus (strain ATCC 43588 / DSM 3639 / JCM 9404 / F1), this protein is Large ribosomal subunit protein uL24.